The sequence spans 250 residues: Electron transport regulator A (250 aa).

One can recognise an HTH crp-type domain in the interval 164 to 237; the sequence is KNAEERLAAF…GKYIIIVDHH (74 aa). Positions 197–216 form a DNA-binding region, H-T-H motif; sequence RGDIGNYLGLTVETISRLLG.

In terms of assembly, monomer.

Its function is as follows. Regulates anaerobic growth on fumarate, nitrite, Fe(3+), TMAO, DMSO, thiosulfate and sulfite, but not on nitrate nor Mn(4+). The protein is Electron transport regulator A (etrA) of Shewanella oneidensis (strain ATCC 700550 / JCM 31522 / CIP 106686 / LMG 19005 / NCIMB 14063 / MR-1).